The chain runs to 90 residues: Probable Fe(2+)-trafficking protein (90 aa).

It belongs to the Fe(2+)-trafficking protein family. Monomer.

In terms of biological role, could be a mediator in iron transactions between iron acquisition and iron-requiring processes, such as synthesis and/or repair of Fe-S clusters in biosynthetic enzymes. The sequence is that of Probable Fe(2+)-trafficking protein from Proteus mirabilis (strain HI4320).